A 335-amino-acid chain; its full sequence is Ankyrin repeat and SOCS box protein 1 (335 aa).

6 ANK repeats span residues 36 to 68, 77 to 106, 110 to 139, 143 to 172, 191 to 220, and 235 to 265; these read CEDT…RINE, LPCT…EVDL, KGQT…DPNG, HRST…DVDV, LVVC…NPDF, and SPGC…NLNL. The SOCS box domain maps to 286-335; sequence LQVFKEARSVPRTLLCLCRVAVRRALGKHRLHLIPSLPLPDPIKKFLLHE.

It belongs to the ankyrin SOCS box (ASB) family. In terms of assembly, interacts with CUL5 and RNF7. Interacts with TAB2 and TAB3.

The protein resides in the cytoplasm. It participates in protein modification; protein ubiquitination. Its function is as follows. Probable substrate-recognition component of a SCF-like ECS (Elongin-Cullin-SOCS-box protein) E3 ligase complex which mediates the ubiquitination and subsequent proteasomal degradation of target proteins. Mediates Notch-induced ubiquitination and degradation of TCF3/E2A and JAK2. Functions as a tumor suppressor by enhancing CHCHD3 'Lys-48'-linked ubiquitination, leading to inhibition of the CHCHD3/ROS signaling pathway. Suppresses TAB2-linked 'Lys-48' polyubiquitination and consequently facilitates the initiation of NF-kappa-B and MAPK signaling cascades. May play a role in testis development. The protein is Ankyrin repeat and SOCS box protein 1 (ASB1) of Homo sapiens (Human).